The chain runs to 376 residues: Cell adhesion molecule CEACAM18 (376 aa).

The signal sequence occupies residues 1-30 (MDFSRPSFSPWRWLTLVASLLTCGICQASG). Residues 31–330 (QIFISPDSLL…PLPTVNRELY (300 aa)) are Extracellular-facing. N-linked (GlcNAc...) asparagine glycosylation is found at asparagine 69, asparagine 95, and asparagine 110. The region spanning 229–314 (PDYVSLWTQP…TQLTFYRDVT (86 aa)) is the Ig-like C2-type domain. A disulfide bridge links cysteine 257 with cysteine 298. A helical transmembrane segment spans residues 331–351 (IPGPLVIFLILLTSLGGAFVC). Over 352–376 (RVLVYSLFQSCSRGKTCHKCPWQTN) the chain is Cytoplasmic.

It belongs to the immunoglobulin superfamily. CEA family. In terms of tissue distribution, mostly expressed in the small and large intestine and at lower levels also in other organs.

It localises to the membrane. This chain is Cell adhesion molecule CEACAM18, found in Mus musculus (Mouse).